Consider the following 533-residue polypeptide: Beta-1,4 N-acetylgalactosaminyltransferase 1 (533 aa).

Residues 1–7 lie on the Cytoplasmic side of the membrane; the sequence is MRLDRRA. The chain crosses the membrane as a helical; Signal-anchor for type II membrane protein span at residues 8–25; the sequence is LYALVLLLACASLGLLYS. Residues 26-533 lie on the Lumenal side of the membrane; it reads STRNAPSLPN…KHRLQCMTAE (508 aa). N-linked (GlcNAc...) asparagine glycosylation is found at Asn79, Asn179, and Asn274. A disulfide bridge links Cys429 with Cys476.

It belongs to the glycosyltransferase 2 family. Homodimer; disulfide-linked. Most abundant in brain, liver, lung, spleen and testis.

Its subcellular location is the golgi apparatus membrane. It carries out the reaction a ganglioside GM3 (d18:1(4E)) + UDP-N-acetyl-alpha-D-galactosamine = a ganglioside GM2 (d18:1(4E)) + UDP + H(+). It catalyses the reaction a ganglioside GD3 (d18:1(4E)) + UDP-N-acetyl-alpha-D-galactosamine = a ganglioside GD2 (d18:1(4E)) + UDP + H(+). The catalysed reaction is a ganglioside GM3 + UDP-N-acetyl-alpha-D-galactosamine = a ganglioside GM2 + UDP + H(+). The enzyme catalyses a ganglioside GD3 + UDP-N-acetyl-alpha-D-galactosamine = a ganglioside GD2 + UDP + H(+). It carries out the reaction a ganglioside GD1a + UDP-N-acetyl-alpha-D-galactosamine = a ganglioside GalNAc-GD1a + UDP + H(+). It catalyses the reaction a ganglioside GT3 (d18:1(4E)) + UDP-N-acetyl-alpha-D-galactosamine = a ganglioside GT2 (d18:1(4E)) + UDP + H(+). The catalysed reaction is a beta-D-Gal-(1-&gt;4)-beta-D-Glc-(1&lt;-&gt;1)-Cer(d18:1(4E)) + UDP-N-acetyl-alpha-D-galactosamine = a ganglioside GA2 (d18:1(4E)) + UDP + H(+). The enzyme catalyses a neolactoside IV(3)-alpha-NeuGc-nLc4Cer + UDP-N-acetyl-alpha-D-galactosamine = a neolactoside IV(4)-beta-GalNAc-IV(3)-alpha-NeuGc-nLc4Cer + UDP + H(+). It functions in the pathway sphingolipid metabolism. Its function is as follows. Involved in the biosynthesis of gangliosides GM2, GD2 and GA2. In terms of biological role, involved in the biosynthesis of gangliosides GM2, GD2, GT2 and GA2 from GM3, GD3, GT3 and GA3, respectively. This chain is Beta-1,4 N-acetylgalactosaminyltransferase 1, found in Mus musculus (Mouse).